The chain runs to 498 residues: Putative antiporter subunit mnhD2 (498 aa).

The next 14 membrane-spanning stretches (helical) occupy residues 2–22 (LSNLLILPMLLPFLCALILVF), 32–52 (YLYLGTMTITTIISLMLLIYV), 78–98 (LSLIMVTTASFVITLIMAYGF), 108–128 (YHLPSFILFLSVGVIGSFLTS), 130–150 (LFNLYVMFEIMLLASFVLITL), 161–181 (IIYVVLNIIGSWLFLLGIGLL), 209–229 (ISLIFLVAFSAKAALVLFMWL), 240–260 (LAALFAALMTKVGAYALIRFF), 271–291 (IHPLLVTMAAITMVIGAIGVI), 308–328 (IGFIILGLGTNTFAGINGAIF), 330–350 (LVNDIVVKTLLFFIIGSLVYI), 368–388 (FFGVAFIIMIFAIGGVPPFSG), 403–423 (GNYIGLALMIITSLIAMYSLF), and 450–470 (GILSILVVVVIAIGIAAPVLL).

It belongs to the CPA3 antiporters (TC 2.A.63) subunit D family. As to quaternary structure, may form a heterooligomeric complex that consists of seven subunits: mnhA2, mnhB2, mnhC2, mnhD2, mnhE2, mnhF2 and mnhG2.

It is found in the cell membrane. This Staphylococcus aureus (strain MRSA252) protein is Putative antiporter subunit mnhD2 (mnhD2).